A 349-amino-acid polypeptide reads, in one-letter code: Anthranilate phosphoribosyltransferase (349 aa).

5-phospho-alpha-D-ribose 1-diphosphate is bound by residues Gly82, 85 to 86 (GD), 92 to 95 (NVST), 110 to 118 (KHGNRAVSG), and Ser122. An anthranilate-binding site is contributed by Gly82. Position 94 (Ser94) interacts with Mg(2+). Asn113 is an anthranilate binding site. Residue Arg168 participates in anthranilate binding. Positions 227 and 228 each coordinate Mg(2+).

It belongs to the anthranilate phosphoribosyltransferase family. As to quaternary structure, homodimer. It depends on Mg(2+) as a cofactor.

The enzyme catalyses N-(5-phospho-beta-D-ribosyl)anthranilate + diphosphate = 5-phospho-alpha-D-ribose 1-diphosphate + anthranilate. The protein operates within amino-acid biosynthesis; L-tryptophan biosynthesis; L-tryptophan from chorismate: step 2/5. Functionally, catalyzes the transfer of the phosphoribosyl group of 5-phosphorylribose-1-pyrophosphate (PRPP) to anthranilate to yield N-(5'-phosphoribosyl)-anthranilate (PRA). This Pseudomonas fluorescens (strain Pf0-1) protein is Anthranilate phosphoribosyltransferase.